We begin with the raw amino-acid sequence, 387 residues long: MFHILNKGSSKSCIYTRPCLKRFYHQHYEHTGKLSRTFFSPTHIKYNRLSTLDTSTSTANAAPDPQVLTFLSKRMQAAPLYPKPSAFLELGKPRLTVLVVLSTMSSYALAPYPGLSFNTLAWLTMGTALCSISANAFNQSMEPMLDCQMARTRSRPIPRGAIRPEYAWLFATLTGIAGTSMSFLVNPTVGWLGLGNIVLYMGIYTPLKRISIVNTWVGSLVGAIPPLMGWAACSGGDLLSHPGGLITAAMLFAWQFPHFNAFSTMVKDDYKKCGYQMMAWKNPALNARVSLRYALAFLPLSYAYISTGLVGPWYAVPATGTNMFLIARAWKFYRNRNYQNARSLFFASLLHLPLLFTLTLACHMIKVWNDSDSKNPVLGSEEDTLKY.

A run of 8 helical transmembrane segments spans residues 95–115 (LTVL…YPGL), 117–137 (FNTL…ANAF), 183–203 (FLVN…YMGI), 212–232 (IVNT…GWAA), 242–262 (PGGL…FNAF), 284–306 (ALNA…AYIS), 311–330 (GPWY…ARAW), and 345–365 (FFAS…CHMI).

Belongs to the UbiA prenyltransferase family.

It is found in the mitochondrion membrane. The catalysed reaction is heme b + (2E,6E)-farnesyl diphosphate + H2O = Fe(II)-heme o + diphosphate. Functionally, converts protoheme IX and farnesyl diphosphate to heme O. In Schizosaccharomyces pombe (strain 972 / ATCC 24843) (Fission yeast), this protein is Protoheme IX farnesyltransferase, mitochondrial (cox10).